The chain runs to 487 residues: Protein nucleotidyltransferase YdiU (487 aa).

ATP contacts are provided by G90, G92, R93, K113, D125, G126, R176, and R183. D252 acts as the Proton acceptor in catalysis. 2 residues coordinate Mg(2+): N253 and D262. An ATP-binding site is contributed by D262.

It belongs to the SELO family. The cofactor is Mg(2+). Mn(2+) is required as a cofactor.

It carries out the reaction L-seryl-[protein] + ATP = 3-O-(5'-adenylyl)-L-seryl-[protein] + diphosphate. The catalysed reaction is L-threonyl-[protein] + ATP = 3-O-(5'-adenylyl)-L-threonyl-[protein] + diphosphate. The enzyme catalyses L-tyrosyl-[protein] + ATP = O-(5'-adenylyl)-L-tyrosyl-[protein] + diphosphate. It catalyses the reaction L-histidyl-[protein] + UTP = N(tele)-(5'-uridylyl)-L-histidyl-[protein] + diphosphate. It carries out the reaction L-seryl-[protein] + UTP = O-(5'-uridylyl)-L-seryl-[protein] + diphosphate. The catalysed reaction is L-tyrosyl-[protein] + UTP = O-(5'-uridylyl)-L-tyrosyl-[protein] + diphosphate. Nucleotidyltransferase involved in the post-translational modification of proteins. It can catalyze the addition of adenosine monophosphate (AMP) or uridine monophosphate (UMP) to a protein, resulting in modifications known as AMPylation and UMPylation. In Pseudomonas fluorescens (strain SBW25), this protein is Protein nucleotidyltransferase YdiU.